A 294-amino-acid polypeptide reads, in one-letter code: Dof zinc finger protein DOF4.1 (294 aa).

The Dof-type zinc finger occupies 68-122 (RNCPRCNSSNTKFCYYNNYSLAQPRYLCKSCRRYWTEGGSLRNVPVGGGSRKNKK). Positions 70, 73, 95, and 98 each coordinate Zn(2+). Disordered regions lie at residues 109–178 (RNVP…DKRA) and 247–294 (MYPY…GPTW). 2 stretches are compositionally biased toward polar residues: residues 126–136 (PNSSTSSSTKN) and 157–173 (KTHQ…SSPM). Positions 251–273 (GDHEDRQQHHHVRHDDGNKKREG) are enriched in basic and acidic residues. Residues 284-294 (ILGGDSGGPTW) show a composition bias toward gly residues.

The protein localises to the nucleus. Its function is as follows. Transcription factor that binds specifically to a 5'-AA[AG]G-3' consensus core sequence. This is Dof zinc finger protein DOF4.1 (DOF4.1) from Arabidopsis thaliana (Mouse-ear cress).